The sequence spans 344 residues: tRNA N6-adenosine threonylcarbamoyltransferase (344 aa).

Histidine 111 and histidine 115 together coordinate Fe cation. Substrate contacts are provided by residues 133–137 (VVSGG), aspartate 166, glycine 179, aspartate 183, and asparagine 270. Aspartate 298 contributes to the Fe cation binding site.

The protein belongs to the KAE1 / TsaD family. Requires Fe(2+) as cofactor.

It is found in the cytoplasm. The enzyme catalyses L-threonylcarbamoyladenylate + adenosine(37) in tRNA = N(6)-L-threonylcarbamoyladenosine(37) in tRNA + AMP + H(+). Its function is as follows. Required for the formation of a threonylcarbamoyl group on adenosine at position 37 (t(6)A37) in tRNAs that read codons beginning with adenine. Is involved in the transfer of the threonylcarbamoyl moiety of threonylcarbamoyl-AMP (TC-AMP) to the N6 group of A37, together with TsaE and TsaB. TsaD likely plays a direct catalytic role in this reaction. In Persephonella marina (strain DSM 14350 / EX-H1), this protein is tRNA N6-adenosine threonylcarbamoyltransferase.